The chain runs to 244 residues: tRNA pseudouridine synthase A (244 aa).

Asp53 (nucleophile) is an active-site residue. Tyr111 serves as a coordination point for substrate.

The protein belongs to the tRNA pseudouridine synthase TruA family. As to quaternary structure, homodimer.

It carries out the reaction uridine(38/39/40) in tRNA = pseudouridine(38/39/40) in tRNA. Functionally, formation of pseudouridine at positions 38, 39 and 40 in the anticodon stem and loop of transfer RNAs. The protein is tRNA pseudouridine synthase A of Bacillus sp. (strain KSM-64).